A 348-amino-acid polypeptide reads, in one-letter code: Selenide, water dikinase (348 aa).

Cysteine 17 is a catalytic residue. ATP is bound by residues lysine 20 and 47–49; that span reads THD. Aspartate 50 contributes to the Mg(2+) binding site. ATP is bound by residues aspartate 67, aspartate 90, and 138–140; that span reads GHT. Aspartate 90 contacts Mg(2+). Residue aspartate 226 coordinates Mg(2+).

Belongs to the selenophosphate synthase 1 family. Class I subfamily. In terms of assembly, homodimer. Requires Mg(2+) as cofactor.

The catalysed reaction is hydrogenselenide + ATP + H2O = selenophosphate + AMP + phosphate + 2 H(+). Functionally, synthesizes selenophosphate from selenide and ATP. The chain is Selenide, water dikinase from Porphyromonas gingivalis (strain ATCC 33277 / DSM 20709 / CIP 103683 / JCM 12257 / NCTC 11834 / 2561).